We begin with the raw amino-acid sequence, 431 residues long: Phosphoribosylamine--glycine ligase (431 aa).

The ATP-grasp domain maps to 108–315 (KDFLARHEIP…LVLLVEAAFA (208 aa)). Residue 134-195 (LQEKGAPIVI…EEFLDGEEAS (62 aa)) coordinates ATP. Mg(2+) is bound by residues Glu285 and Asn287.

The protein belongs to the GARS family. Requires Mg(2+) as cofactor. It depends on Mn(2+) as a cofactor.

The catalysed reaction is 5-phospho-beta-D-ribosylamine + glycine + ATP = N(1)-(5-phospho-beta-D-ribosyl)glycinamide + ADP + phosphate + H(+). It participates in purine metabolism; IMP biosynthesis via de novo pathway; N(1)-(5-phospho-D-ribosyl)glycinamide from 5-phospho-alpha-D-ribose 1-diphosphate: step 2/2. This Pseudomonas putida (strain ATCC 47054 / DSM 6125 / CFBP 8728 / NCIMB 11950 / KT2440) protein is Phosphoribosylamine--glycine ligase.